The chain runs to 344 residues: Oxygen sensor histidine kinase NreB (344 aa).

[4Fe-4S] cluster-binding residues include Cys58, Cys61, Cys73, and Cys76. Residues Arg152–Ile344 form the Histidine kinase domain. A Phosphohistidine; by autocatalysis modification is found at His158.

[4Fe-4S] cluster serves as cofactor. Autophosphorylated.

It is found in the cytoplasm. It carries out the reaction ATP + protein L-histidine = ADP + protein N-phospho-L-histidine.. Functionally, member of the two-component regulatory system NreB/NreC involved in the control of dissimilatory nitrate/nitrite reduction in response to oxygen. NreB functions as a direct oxygen sensor histidine kinase which is autophosphorylated, in the absence of oxygen, probably at the conserved histidine residue, and transfers its phosphate group probably to a conserved aspartate residue of NreC. NreB/NreC activates the expression of the nitrate (narGHJI) and nitrite (nir) reductase operons, as well as the putative nitrate transporter gene narT. This chain is Oxygen sensor histidine kinase NreB (nreB), found in Staphylococcus aureus (strain JH1).